Reading from the N-terminus, the 303-residue chain is MLWFKNLMVYRLSREVSLSADEMEKQLSAFSFTPCGSQDMAKTGWVSPMGSHSDALTHTVNGQIVICARKEEKILPSPVIKQELQAKIERLEGEQHRKLKKTEKDSLKDEVLHSLLPRAFSRFNQTFLWIDTVNDLIMVDAASAKRAEDTLALLRKSLGSLPVVPLTLENPIELTLTEWVRSKELPSGFALMDEAELKAILEDGGVIRCKKQDLFSDEIAVHIEAGKLVTKLALDWQERVQLVLSDDGSLKRLKFSDTLREQNEDIDQEDFAQRFDADFILMTSELAALIKNLIEALGGEAQH.

It belongs to the RdgC family.

Its subcellular location is the cytoplasm. It localises to the nucleoid. Its function is as follows. May be involved in recombination. The chain is Recombination-associated protein RdgC from Yersinia enterocolitica serotype O:8 / biotype 1B (strain NCTC 13174 / 8081).